Reading from the N-terminus, the 559-residue chain is Coiled-coil domain-containing protein 63 (559 aa).

Coiled coils occupy residues 14–70 (ELSE…QAET), 185–261 (EKAA…KLKS), and 364–414 (QQQS…VEKL).

Functionally, plays a role in spermiogenesis. Involved in the elongation of flagella and the formation of sperm heads. The protein is Coiled-coil domain-containing protein 63 of Rattus norvegicus (Rat).